The sequence spans 402 residues: Deoxyguanosinetriphosphate triphosphohydrolase-like protein (402 aa).

In terms of domain architecture, HD spans 73-217; it reads RLTHTIEVAQ…AAIADDIAYN (145 aa).

This sequence belongs to the dGTPase family. Type 2 subfamily.

This Brucella suis (strain ATCC 23445 / NCTC 10510) protein is Deoxyguanosinetriphosphate triphosphohydrolase-like protein.